The sequence spans 954 residues: Glycine dehydrogenase (decarboxylating) (954 aa).

Lysine 706 carries the N6-(pyridoxal phosphate)lysine modification.

This sequence belongs to the GcvP family. The glycine cleavage system is composed of four proteins: P, T, L and H. Pyridoxal 5'-phosphate is required as a cofactor.

It carries out the reaction N(6)-[(R)-lipoyl]-L-lysyl-[glycine-cleavage complex H protein] + glycine + H(+) = N(6)-[(R)-S(8)-aminomethyldihydrolipoyl]-L-lysyl-[glycine-cleavage complex H protein] + CO2. In terms of biological role, the glycine cleavage system catalyzes the degradation of glycine. The P protein binds the alpha-amino group of glycine through its pyridoxal phosphate cofactor; CO(2) is released and the remaining methylamine moiety is then transferred to the lipoamide cofactor of the H protein. In Pseudomonas syringae pv. syringae (strain B728a), this protein is Glycine dehydrogenase (decarboxylating).